A 92-amino-acid polypeptide reads, in one-letter code: Small ribosomal subunit protein uS19 (92 aa).

This sequence belongs to the universal ribosomal protein uS19 family.

Functionally, protein S19 forms a complex with S13 that binds strongly to the 16S ribosomal RNA. In Shewanella putrefaciens (strain CN-32 / ATCC BAA-453), this protein is Small ribosomal subunit protein uS19.